Here is a 331-residue protein sequence, read N- to C-terminus: uncharacterized protein (331 aa).

It belongs to the proline racemase family.

This is an uncharacterized protein from Bacillus anthracis.